We begin with the raw amino-acid sequence, 268 residues long: Peptide transport system ATP-binding protein SapF (268 aa).

The ABC transporter domain occupies 6-251 (LEVRNLSKTF…PLHELTRRLI (246 aa)). ATP is bound at residue 47-54 (GENGSGKS).

It belongs to the ABC transporter superfamily.

The protein localises to the cell inner membrane. Involved in a peptide intake transport system that plays a role in the resistance to antimicrobial peptides. This Salmonella typhimurium (strain LT2 / SGSC1412 / ATCC 700720) protein is Peptide transport system ATP-binding protein SapF.